Here is a 158-residue protein sequence, read N- to C-terminus: Small ribosomal subunit protein uS9 (158 aa).

This sequence belongs to the universal ribosomal protein uS9 family.

This chain is Small ribosomal subunit protein uS9, found in Brucella melitensis biotype 2 (strain ATCC 23457).